We begin with the raw amino-acid sequence, 426 residues long: Glutamate-1-semialdehyde 2,1-aminomutase (426 aa).

Lys265 bears the N6-(pyridoxal phosphate)lysine mark.

It belongs to the class-III pyridoxal-phosphate-dependent aminotransferase family. HemL subfamily. In terms of assembly, homodimer. Requires pyridoxal 5'-phosphate as cofactor.

The protein resides in the cytoplasm. It catalyses the reaction (S)-4-amino-5-oxopentanoate = 5-aminolevulinate. It participates in porphyrin-containing compound metabolism; protoporphyrin-IX biosynthesis; 5-aminolevulinate from L-glutamyl-tRNA(Glu): step 2/2. The sequence is that of Glutamate-1-semialdehyde 2,1-aminomutase from Actinobacillus pleuropneumoniae serotype 5b (strain L20).